The chain runs to 372 residues: MTFSKQLFLYLFFLFPLLHASHPQQCSSSSCGRDDVHVRFPFWLLSKQPELCGHAGFNLQCTASPKTALKLPNSGTFLVREIDYLSQQIRLYDPENCLARKLLTFDISRSPFSALYLVSYTFLSCPNEVAKSSRFDSIPCLGNSTTSFLATTSLDLAKSMLPSCQIVKTLDVPVSRRVIAKKSRFSTDVNDKDLWLKWDSPSCSDCERDFLRCGFRSNTSLQVKCFPFENSGYNTEPQVLKIILLSIIGPLTIFATCIAVGVCTSERFASLIQRNVAIAALQPNEVIVTTGLDESIIESYKKTELGESRRLPGNNDDIVCPICLSEYASKETVRCIPECDHCFHSECIDVWLKIHGSCPLCRNSPSPARQAV.

Residues 1 to 20 form the signal peptide; the sequence is MTFSKQLFLYLFFLFPLLHA. Residues 242 to 262 form a helical membrane-spanning segment; the sequence is IILLSIIGPLTIFATCIAVGV. The segment at 320–362 adopts an RING-type; atypical zinc-finger fold; the sequence is CPICLSEYASKETVRCIPECDHCFHSECIDVWLKIHGSCPLCR.

It belongs to the RING-type zinc finger family. ATL subfamily.

The protein localises to the membrane. The catalysed reaction is S-ubiquitinyl-[E2 ubiquitin-conjugating enzyme]-L-cysteine + [acceptor protein]-L-lysine = [E2 ubiquitin-conjugating enzyme]-L-cysteine + N(6)-ubiquitinyl-[acceptor protein]-L-lysine.. The protein operates within protein modification; protein ubiquitination. This is Putative RING-H2 finger protein ATL21A (ATL21A) from Arabidopsis thaliana (Mouse-ear cress).